Consider the following 361-residue polypeptide: Chorismate synthase (361 aa).

2 residues coordinate NADP(+): Arg-48 and Arg-54. Residues 125-127, 238-239, Gly-278, 293-297, and Arg-319 contribute to the FMN site; these read RSS, NA, and KPTSS.

Belongs to the chorismate synthase family. As to quaternary structure, homotetramer. FMNH2 serves as cofactor.

It catalyses the reaction 5-O-(1-carboxyvinyl)-3-phosphoshikimate = chorismate + phosphate. It functions in the pathway metabolic intermediate biosynthesis; chorismate biosynthesis; chorismate from D-erythrose 4-phosphate and phosphoenolpyruvate: step 7/7. Its function is as follows. Catalyzes the anti-1,4-elimination of the C-3 phosphate and the C-6 proR hydrogen from 5-enolpyruvylshikimate-3-phosphate (EPSP) to yield chorismate, which is the branch point compound that serves as the starting substrate for the three terminal pathways of aromatic amino acid biosynthesis. This reaction introduces a second double bond into the aromatic ring system. This is Chorismate synthase from Salmonella arizonae (strain ATCC BAA-731 / CDC346-86 / RSK2980).